Reading from the N-terminus, the 117-residue chain is Biofilm growth-associated repressor (117 aa).

The HTH arsR-type domain occupies 20 to 114 (AMEKRATEVA…ALYAIFCAPE (95 aa)). The H-T-H motif DNA-binding region spans 54–77 (VGELEAKLDIRQPTLSQQLGVLRE).

Its function is as follows. Represses an operon that comprises at least itself and blh. Binds to a palindromic AT-rich sequence spanning the -10 region of the blh promoter and blocks transcription of the operon. This is Biofilm growth-associated repressor (bigR) from Agrobacterium fabrum (strain C58 / ATCC 33970) (Agrobacterium tumefaciens (strain C58)).